Reading from the N-terminus, the 111-residue chain is Photosystem II reaction center Psb28 protein (111 aa).

The protein belongs to the Psb28 family. In terms of assembly, part of the photosystem II complex.

The protein localises to the cellular thylakoid membrane. The chain is Photosystem II reaction center Psb28 protein from Crocosphaera subtropica (strain ATCC 51142 / BH68) (Cyanothece sp. (strain ATCC 51142)).